We begin with the raw amino-acid sequence, 108 residues long: Holo-[acyl-carrier-protein] synthase (108 aa).

Mg(2+) contacts are provided by D9 and E52.

The protein belongs to the P-Pant transferase superfamily. AcpS family. Mg(2+) serves as cofactor.

The protein resides in the cytoplasm. It catalyses the reaction apo-[ACP] + CoA = holo-[ACP] + adenosine 3',5'-bisphosphate + H(+). Functionally, transfers the 4'-phosphopantetheine moiety from coenzyme A to a Ser of acyl-carrier-protein. The protein is Holo-[acyl-carrier-protein] synthase of Coprothermobacter proteolyticus (strain ATCC 35245 / DSM 5265 / OCM 4 / BT).